Here is a 481-residue protein sequence, read N- to C-terminus: N-succinylglutamate 5-semialdehyde dehydrogenase (481 aa).

An NAD(+)-binding site is contributed by 206 to 211 (GSARTG). Active-site residues include Glu229 and Cys263.

This sequence belongs to the aldehyde dehydrogenase family. AstD subfamily.

The catalysed reaction is N-succinyl-L-glutamate 5-semialdehyde + NAD(+) + H2O = N-succinyl-L-glutamate + NADH + 2 H(+). Its pathway is amino-acid degradation; L-arginine degradation via AST pathway; L-glutamate and succinate from L-arginine: step 4/5. In terms of biological role, catalyzes the NAD-dependent reduction of succinylglutamate semialdehyde into succinylglutamate. This is N-succinylglutamate 5-semialdehyde dehydrogenase from Sphingopyxis alaskensis (strain DSM 13593 / LMG 18877 / RB2256) (Sphingomonas alaskensis).